The chain runs to 501 residues: MKFSIADKSIKQTKDILLILGIFYKDCYQKTLKYISDENKKNIIQVVKNIKIKDNIGSTYFISNTNKVGSNPILLIMLGSKVNINSRIYKKLIINTISSIKNIKYKKSIFFLLNLNFNNSNLYWKIRRSIEYIYESLYEFNNFKSKTKSYKIYMKEIMFYIHDENEIKQANIAISHSVSISKGIIITKNLGNMPSNFCDPHYLSHQSYILKDKYSEKISVEIMDHKKIKNIGMNAYLHVSKGSSKNPYLSIIKYNENKFNGKSPIILIGKGLTFDSGGISIKPSNNMDEMKFDMCGAAAVLGVMHAISELNLNLYVIGILACCENMVDSSSYKPGDIIKTLSGKTVEVINTDAEGRLVLCDVITYVKRFNPRIVIDIATLTGACVIALGHHYTGLISNCDELSENILNASNITEDLAWRLPLNKKFSKQLKSRFADISNISDRSGSAITAGCFLYEFAKEYKWAHLDIAGTAWKSGVYKQATGRPVSLLTQLLINYGDKKI.

Mn(2+) is bound by residues K270 and D275. The active site involves K282. Mn(2+)-binding residues include D293, D352, and E354. The active site involves R356.

This sequence belongs to the peptidase M17 family. The cofactor is Mn(2+).

The protein resides in the cytoplasm. The catalysed reaction is Release of an N-terminal amino acid, Xaa-|-Yaa-, in which Xaa is preferably Leu, but may be other amino acids including Pro although not Arg or Lys, and Yaa may be Pro. Amino acid amides and methyl esters are also readily hydrolyzed, but rates on arylamides are exceedingly low.. It catalyses the reaction Release of an N-terminal amino acid, preferentially leucine, but not glutamic or aspartic acids.. Functionally, presumably involved in the processing and regular turnover of intracellular proteins. Catalyzes the removal of unsubstituted N-terminal amino acids from various peptides. The protein is Probable cytosol aminopeptidase of Wigglesworthia glossinidia brevipalpis.